The sequence spans 284 residues: 4-diphosphocytidyl-2-C-methyl-D-erythritol kinase (284 aa).

Residue Lys14 is part of the active site. Residue 98–108 (PMGGGLGGGSS) coordinates ATP. Asp140 is an active-site residue.

This sequence belongs to the GHMP kinase family. IspE subfamily.

It carries out the reaction 4-CDP-2-C-methyl-D-erythritol + ATP = 4-CDP-2-C-methyl-D-erythritol 2-phosphate + ADP + H(+). It functions in the pathway isoprenoid biosynthesis; isopentenyl diphosphate biosynthesis via DXP pathway; isopentenyl diphosphate from 1-deoxy-D-xylulose 5-phosphate: step 3/6. In terms of biological role, catalyzes the phosphorylation of the position 2 hydroxy group of 4-diphosphocytidyl-2C-methyl-D-erythritol. The protein is 4-diphosphocytidyl-2-C-methyl-D-erythritol kinase of Shewanella baltica (strain OS185).